Here is a 449-residue protein sequence, read N- to C-terminus: MALTVKEEEFSNTLIKNASAFDRLKLGNLKNLKIQKKLQFLYLILFVLITGVFFFFLIGNFYSHRKLYQVIKNTKHTTIGFKIDRPHDKVLSSVLKNKLSTYVKESFKFFKSGYAQKGYLGSENDSIELDDVANLMFYGEGQIGTNKQPFMFIFDTGSANLWVPSVNCDSIGCSTKHLYDASASKSYEKDGTKVEISYGSGTVRGYFSKDVISLGDLSLPYKFIEVTDADDLEPIYSGSEFDGILGLGWKDLSIGSIDPVVVELKKQNKIDNALFTFYLPVHDKHVGYLTIGGIESDFYEGPLTYEKLNHDLYWQIDLDIHFGKYVMQKANAVVDSGTSTITAPTSFLNKFFTDMNVIKVPFLPLYVTTCDNDDLPTLEFHSRNNKYTLEPEFYMDPLSDIDPALCMLYILPVDIDDNTFILGDPFMRKYFTVFDYEKESVGFAVAKNL.

Topologically, residues 1 to 37 (MALTVKEEEFSNTLIKNASAFDRLKLGNLKNLKIQKK) are cytoplasmic. A propeptide spanning residues 1 to 121 (MALTVKEEEF…SGYAQKGYLG (121 aa)) is cleaved from the precursor. The helical; Signal-anchor for type II membrane protein transmembrane segment at 38-58 (LQFLYLILFVLITGVFFFFLI) threads the bilayer. Residues 59–449 (GNFYSHRKLY…SVGFAVAKNL (391 aa)) lie on the Lumenal side of the membrane. The Peptidase A1 domain maps to 137 to 444 (FYGEGQIGTN…DYEKESVGFA (308 aa)). Aspartate 155 is a catalytic residue. A disulfide bridge links cysteine 168 with cysteine 173. Aspartate 335 is an active-site residue. Cysteines 370 and 406 form a disulfide.

Belongs to the peptidase A1 family. As to quaternary structure, component of the hemozoin formation complex (HFC) composed of falcipains FP2A and/or FP2B, plasmepsins PMII, PMIII/HAP and PMIV, heme detoxifying protein HDP and falcilysin FLN. The HFC complex is involved in hemoglobin degradation and detoxification of heme in the food vacuole during the asexual blood stage. In terms of processing, proteolytically cleaved into the soluble active mature form by cysteine proteases in the digestive vacuole of trophozoites. Proteolysis requires an acidic environment. Autoprocessing or transprocessing by other plasmepsins such as PMII may serve as an alternate activation system.

The protein resides in the membrane. It is found in the vacuole lumen. It catalyses the reaction Hydrolysis of the bonds linking certain hydrophobic residues in hemoglobin or globin. Also cleaves small molecules substrates such as Ala-Leu-Glu-Arg-Thr-Phe-|-Phe(NO2)-Ser-Phe-Pro-Thr.. Inhibited by pepstatin A. During the asexual blood stage, catalyzes the cleavage of denatured host hemoglobin (Hb) or globins. Digestion of host Hb is an essential step which provides the parasite with amino acids for protein synthesis, and regulates osmolarity. The polypeptide is Plasmepsin IV (Plasmodium falciparum (isolate HB3)).